We begin with the raw amino-acid sequence, 371 residues long: Transposase for insertion sequence element IS421 (371 aa).

The protein belongs to the transposase 11 family.

Its function is as follows. Involved in the transposition of the insertion sequence IS421. This chain is Transposase for insertion sequence element IS421, found in Escherichia coli.